The primary structure comprises 439 residues: Divalent metal cation transporter MntH (439 aa).

A run of 11 helical transmembrane segments spans residues G32–D52, G67–L87, I121–L141, M144–E164, L173–T193, A214–H234, V261–G281, A301–I321, A350–L370, V371–F391, and F406–I426.

The protein belongs to the NRAMP family.

Its subcellular location is the cell inner membrane. H(+)-stimulated, divalent metal cation uptake system. The polypeptide is Divalent metal cation transporter MntH (Verminephrobacter eiseniae (strain EF01-2)).